A 2801-amino-acid polypeptide reads, in one-letter code: Neurobeachin-like protein 2 (2801 aa).

Positions 1379–1529 (RHEEEYEEEE…TISNTSNPQA (151 aa)) are disordered. The span at 1383-1393 (EYEEEEGETQD) shows a compositional bias: acidic residues. Composition is skewed to polar residues over residues 1400–1413 (DLSQ…QLKN), 1424–1437 (GDQS…SNTV), 1470–1481 (KGPQTPVGSQPE), and 1500–1528 (SSSL…SNPQ). The BEACH-type PH domain occupies 1986-2086 (SQKEKLVLSE…VRNKVYSRIL (101 aa)). One can recognise a BEACH domain in the interval 2099 to 2391 (RSPQELLKAS…QLLKEPHPPR (293 aa)). 7 WD repeats span residues 2431–2468 (LVQA…SWLP), 2492–2535 (RFLS…MLGK), 2538–2575 (LVGR…VWQV), 2588–2626 (RPIQ…VHSV), 2633–2676 (WTLR…RYAL), 2684–2719 (TLLA…IRDL), and 2727–2762 (APLA…VGAG).

It belongs to the WD repeat neurobeachin family.

It localises to the endoplasmic reticulum. Functionally, involved in thrombopoiesis. Plays a role in the development or secretion of alpha-granules, that contain several growth factors important for platelet biogenesis. The protein is Neurobeachin-like protein 2 (nbeal2) of Danio rerio (Zebrafish).